The primary structure comprises 236 residues: 2,3,4,5-tetrahydropyridine-2,6-dicarboxylate N-acetyltransferase (236 aa).

The protein belongs to the transferase hexapeptide repeat family. DapH subfamily.

The catalysed reaction is (S)-2,3,4,5-tetrahydrodipicolinate + acetyl-CoA + H2O = L-2-acetamido-6-oxoheptanedioate + CoA. Its pathway is amino-acid biosynthesis; L-lysine biosynthesis via DAP pathway; LL-2,6-diaminopimelate from (S)-tetrahydrodipicolinate (acetylase route): step 1/3. Its function is as follows. Catalyzes the transfer of an acetyl group from acetyl-CoA to tetrahydrodipicolinate. This is 2,3,4,5-tetrahydropyridine-2,6-dicarboxylate N-acetyltransferase from Geobacillus thermodenitrificans (strain NG80-2).